A 189-amino-acid polypeptide reads, in one-letter code: Methylated-DNA--protein-cysteine methyltransferase (189 aa).

DNA contacts are provided by Tyr128 and Arg142. Catalysis depends on Cys159, which acts as the Nucleophile; methyl group acceptor. Ser165 is a DNA binding site.

The protein belongs to the MGMT family.

The protein resides in the nucleus. It catalyses the reaction a 6-O-methyl-2'-deoxyguanosine in DNA + L-cysteinyl-[protein] = S-methyl-L-cysteinyl-[protein] + a 2'-deoxyguanosine in DNA. The catalysed reaction is a 4-O-methyl-thymidine in DNA + L-cysteinyl-[protein] = a thymidine in DNA + S-methyl-L-cysteinyl-[protein]. Involved in the cellular defense against the biological effects of O6-methylguanine (O6-MeG) and O4-methylthymine (O4-MeT) in DNA. Repairs the methylated nucleobase in DNA by stoichiometrically transferring the methyl group to a cysteine residue in the enzyme. This is a suicide reaction: the enzyme is irreversibly inactivated. This chain is Methylated-DNA--protein-cysteine methyltransferase (MGT1), found in Kluyveromyces lactis (strain ATCC 8585 / CBS 2359 / DSM 70799 / NBRC 1267 / NRRL Y-1140 / WM37) (Yeast).